The primary structure comprises 110 residues: Bowman-Birk type proteinase inhibitor (110 aa).

The first 28 residues, 1-28 (MVLMNKKAIMKLALMLFLLGFTANVVDA), serve as a signal peptide directing secretion. The propeptide occupies 29 to 42 (RFDSTSFITQVLSN). 7 disulfides stabilise this stretch: C50–C103, C51–C66, C54–C99, C56–C64, C73–C80, C77–C92, and C82–C90.

Monomer.

Functionally, inhibitor of trypsin and of chymotrypsin. The protein is Bowman-Birk type proteinase inhibitor of Lens culinaris (Lentil).